A 108-amino-acid polypeptide reads, in one-letter code: Probable endonuclease 4 (108 aa).

Zn(2+)-binding residues include histidine 2, histidine 36, aspartate 49, histidine 51, and glutamate 81.

This sequence belongs to the AP endonuclease 2 family. Zn(2+) serves as cofactor.

It carries out the reaction Endonucleolytic cleavage to 5'-phosphooligonucleotide end-products.. In terms of biological role, endonuclease IV plays a role in DNA repair. It cleaves phosphodiester bonds at apurinic or apyrimidinic (AP) sites, generating a 3'-hydroxyl group and a 5'-terminal sugar phosphate. The protein is Probable endonuclease 4 (nfo) of Thermotoga neapolitana.